We begin with the raw amino-acid sequence, 126 residues long: Small ribosomal subunit protein uS13 (126 aa).

Residues 95–126 are disordered; that stretch reads GLPVRGQRTRTNARTRKGPRKTVAGKKKAPRK.

This sequence belongs to the universal ribosomal protein uS13 family. As to quaternary structure, part of the 30S ribosomal subunit. Forms a loose heterodimer with protein S19. Forms two bridges to the 50S subunit in the 70S ribosome.

Its function is as follows. Located at the top of the head of the 30S subunit, it contacts several helices of the 16S rRNA. In the 70S ribosome it contacts the 23S rRNA (bridge B1a) and protein L5 of the 50S subunit (bridge B1b), connecting the 2 subunits; these bridges are implicated in subunit movement. Contacts the tRNAs in the A and P-sites. This chain is Small ribosomal subunit protein uS13 (rpsM), found in Thermus thermophilus (strain ATCC BAA-163 / DSM 7039 / HB27).